Consider the following 551-residue polypeptide: Protein ROOT HAIR SPECIFIC 17 (551 aa).

The chain crosses the membrane as a helical; Signal-anchor for type II membrane protein span at residues 39-59 (LFPLVSAVSGCLLLILFSFST). Asn109 and Asn153 each carry an N-linked (GlcNAc...) asparagine glycan. 293-295 (HLR) provides a ligand contact to substrate. 2 N-linked (GlcNAc...) asparagine glycosylation sites follow: Asn405 and Asn465. Positions 515–539 (KAKHVNEDDSSEYSEIGNVPISSRS) are disordered.

It belongs to the glycosyltransferase GT106 family. In terms of tissue distribution, specifically expressed in the root hair.

The protein resides in the membrane. The protein operates within glycan metabolism. This is Protein ROOT HAIR SPECIFIC 17 from Arabidopsis thaliana (Mouse-ear cress).